A 201-amino-acid chain; its full sequence is MPPPEDPEDYVAPAAQRVRAGTLLLANTDLLEPTFRRSVIYIVEHNDGGTLGVVLNRPSDTAVYNVLPQWTTLAAKPKTMFIGGPVKRDAALCLATLRVGADPQGAPGLRHVDGRVVMVDLDADPDAIAPLVEGVRIFAGYSGWTIGQLEGEIERDDWIVLSALPSDVLVGPRSDLWGQVLRRQPLPLSLLATHPIDISRN.

This sequence belongs to the UPF0301 (AlgH) family.

In Mycolicibacterium paratuberculosis (strain ATCC BAA-968 / K-10) (Mycobacterium paratuberculosis), this protein is UPF0301 protein MAP_0045.